Consider the following 560-residue polypeptide: Probable sulfate transporter MT1781 (560 aa).

A run of 11 helical transmembrane segments spans residues 29–49 (VLAG…YATV), 51–71 (GLPP…YALL), 79–99 (IGPE…MAAG), 105–125 (AVLA…AGTA), 138–158 (VLVG…LGTI), 184–204 (WPTF…TRWA), 207–227 (APGP…MSLD), 256–276 (ALII…VLTA), 333–353 (LIAL…LAMF), 355–375 (IAAL…LSEF), and 394–414 (AAVL…LSIL). Positions 442–557 (DYPQAKRVPG…MTLPTAVQAF (116 aa)) constitute an STAS domain.

The protein belongs to the SLC26A/SulP transporter (TC 2.A.53) family.

It is found in the cell membrane. The polypeptide is Probable sulfate transporter MT1781 (Mycobacterium tuberculosis (strain CDC 1551 / Oshkosh)).